Reading from the N-terminus, the 258-residue chain is TLC domain-containing protein 4-A (258 aa).

6 consecutive transmembrane segments (helical) span residues 5–25 (LISY…FSAI), 52–72 (FVST…LAYD), 85–105 (FWVK…LLLL), 116–132 (YMVC…GYVL), 171–191 (PVLL…IAVI), and 212–232 (IGPQ…NVFW). Residues 43–245 (GKQCEWDSRF…IARGFYKVVK (203 aa)) enclose the TLC domain.

The protein belongs to the TLCD4 family.

The protein resides in the membrane. This is TLC domain-containing protein 4-A (tlcd4-a) from Xenopus laevis (African clawed frog).